Reading from the N-terminus, the 23-residue chain is Putative gene 50 protein (23 aa).

The polypeptide is Putative gene 50 protein (50) (Bacillus subtilis (Bacteriophage SP01)).